Here is a 91-residue protein sequence, read N- to C-terminus: Large ribosomal subunit protein uL23c (91 aa).

This sequence belongs to the universal ribosomal protein uL23 family. In terms of assembly, part of the 50S ribosomal subunit.

The protein resides in the plastid. It is found in the chloroplast. Functionally, binds to 23S rRNA. The sequence is that of Large ribosomal subunit protein uL23c (rpl23) from Pinus thunbergii (Japanese black pine).